The sequence spans 273 residues: MAIVKCKPTSAGRRHVVKIVNPELHKGKPYAPLLDTKSKTGGRNNYGRITTRHIGGGHKQHYRLIDFKRNKLDIPAVVERLEYDPNRSANIALVLYKDGERRYILAPKGLSVGDQIQAGINSPIKVGNSLPMRNIPVGSTVHNVELKPGKGGQIARSAGAYVQIIAREGNYVTLRLRSGEMRKVLAECVATIGEVGNSEHMLRVLGKAGANRWRGIRPTVRGTAMNPVDHPHGGGEGRNFGKHPVTPWGVQTKGKKTRHNKRTDKYIVRRRGK.

Positions 221 to 262 (RGTAMNPVDHPHGGGEGRNFGKHPVTPWGVQTKGKKTRHNKR) are disordered. The span at 253 to 262 (KGKKTRHNKR) shows a compositional bias: basic residues.

The protein belongs to the universal ribosomal protein uL2 family. In terms of assembly, part of the 50S ribosomal subunit. Forms a bridge to the 30S subunit in the 70S ribosome.

In terms of biological role, one of the primary rRNA binding proteins. Required for association of the 30S and 50S subunits to form the 70S ribosome, for tRNA binding and peptide bond formation. It has been suggested to have peptidyltransferase activity; this is somewhat controversial. Makes several contacts with the 16S rRNA in the 70S ribosome. The sequence is that of Large ribosomal subunit protein uL2 from Haemophilus influenzae (strain ATCC 51907 / DSM 11121 / KW20 / Rd).